A 239-amino-acid polypeptide reads, in one-letter code: Sensory rhodopsin-2 (239 aa).

At 1–3 (MVG) the chain is on the extracellular side. Residues 4 to 25 (LTTLFWLGAIGMLVGTLAFAWA) form a helical membrane-spanning segment. Topologically, residues 26–33 (GRDAGSGE) are cytoplasmic. A helical membrane pass occupies residues 34–55 (RRYYVTLVGISGIAAVAYVVMA). The Extracellular segment spans residues 56–69 (LGVGWVPVAERTVF). Residues 70–91 (APRYIDWILTTPLIVYFLGLLA) form a helical membrane-spanning segment. Residues 92 to 94 (GLD) lie on the Cytoplasmic side of the membrane. Residues 95–117 (SREFGIVITLNTVVMLAGFAGAM) traverse the membrane as a helical segment. Residues 118–121 (VPGI) lie on the Extracellular side of the membrane. Residues 122 to 149 (ERYALFGMGAVAFLGLVYYLVGPMTESA) traverse the membrane as a helical segment. Residues 150–153 (SQRS) are Cytoplasmic-facing. A helical transmembrane segment spans residues 154–181 (SGIKSLYVRLRNLTVILWAIYPFIWLLG). Over 182-189 (PPGVALLT) the chain is Extracellular. Residues 190–222 (PTVDVALIVYLDLVTKVGFGFIALDAAATLRAE) form a helical membrane-spanning segment. At lysine 205 the chain carries N6-(retinylidene)lysine. Topologically, residues 223–239 (HGESLAGVDTDAPAVAD) are cytoplasmic.

It belongs to the archaeal/bacterial/fungal opsin family. Homodimer. Interacts with HTR-II.

The protein localises to the cell membrane. In terms of biological role, photophobic photoreceptor responsible for the negative phototaxis. Activates the sensory rhodopsin II transducer (HTR-II) in response to blue light. This is Sensory rhodopsin-2 (sop2) from Natronomonas pharaonis (Natronobacterium pharaonis).